Here is a 178-residue protein sequence, read N- to C-terminus: Large ribosomal subunit protein uL6 (178 aa).

The protein belongs to the universal ribosomal protein uL6 family. As to quaternary structure, part of the 50S ribosomal subunit.

In terms of biological role, this protein binds to the 23S rRNA, and is important in its secondary structure. It is located near the subunit interface in the base of the L7/L12 stalk, and near the tRNA binding site of the peptidyltransferase center. This is Large ribosomal subunit protein uL6 from Wolinella succinogenes (strain ATCC 29543 / DSM 1740 / CCUG 13145 / JCM 31913 / LMG 7466 / NCTC 11488 / FDC 602W) (Vibrio succinogenes).